The chain runs to 191 residues: Molybdenum cofactor guanylyltransferase (191 aa).

Residues 13 to 15 (LAG), lysine 26, aspartate 72, and aspartate 102 contribute to the GTP site. Aspartate 102 lines the Mg(2+) pocket.

The protein belongs to the MobA family. In terms of assembly, monomer. It depends on Mg(2+) as a cofactor.

It localises to the cytoplasm. The enzyme catalyses Mo-molybdopterin + GTP + H(+) = Mo-molybdopterin guanine dinucleotide + diphosphate. Functionally, transfers a GMP moiety from GTP to Mo-molybdopterin (Mo-MPT) cofactor (Moco or molybdenum cofactor) to form Mo-molybdopterin guanine dinucleotide (Mo-MGD) cofactor. The chain is Molybdenum cofactor guanylyltransferase from Pseudomonas entomophila (strain L48).